The following is a 680-amino-acid chain: DNA-directed RNA polymerase subunit beta' (680 aa).

4 residues coordinate Zn(2+): cysteine 69, cysteine 71, cysteine 87, and cysteine 90. Mg(2+)-binding residues include aspartate 489, aspartate 491, and aspartate 493.

This sequence belongs to the RNA polymerase beta' chain family. RpoC1 subfamily. In terms of assembly, in plastids the minimal PEP RNA polymerase catalytic core is composed of four subunits: alpha, beta, beta', and beta''. When a (nuclear-encoded) sigma factor is associated with the core the holoenzyme is formed, which can initiate transcription. Requires Mg(2+) as cofactor. It depends on Zn(2+) as a cofactor.

It localises to the plastid. The protein resides in the chloroplast. It catalyses the reaction RNA(n) + a ribonucleoside 5'-triphosphate = RNA(n+1) + diphosphate. DNA-dependent RNA polymerase catalyzes the transcription of DNA into RNA using the four ribonucleoside triphosphates as substrates. The protein is DNA-directed RNA polymerase subunit beta' of Carica papaya (Papaya).